Consider the following 156-residue polypeptide: Small ribosomal subunit protein uS7c (156 aa).

Belongs to the universal ribosomal protein uS7 family. Part of the 30S ribosomal subunit.

It localises to the plastid. The protein localises to the chloroplast. In terms of biological role, one of the primary rRNA binding proteins, it binds directly to 16S rRNA where it nucleates assembly of the head domain of the 30S subunit. The polypeptide is Small ribosomal subunit protein uS7c (rps7) (Chlorokybus atmophyticus (Soil alga)).